The primary structure comprises 185 residues: MINEIKKDAQERMEKSVEALKNNLLKIRTGRAHPSLLSGLSVEYYGARTPINQVANIIAEDSRTLAITVFDKELAGLVEKAIMMSDLGLNPMSAGTVIRVPLPPLTEERRKSLVKIVRGEAENGRVAVRNIRRDANGDIKALLKDKEISEDDDRRTQDEIQKLTDIAVKNIDDVLAVKEKELMEV.

The protein belongs to the RRF family.

It localises to the cytoplasm. Responsible for the release of ribosomes from messenger RNA at the termination of protein biosynthesis. May increase the efficiency of translation by recycling ribosomes from one round of translation to another. This Aliivibrio salmonicida (strain LFI1238) (Vibrio salmonicida (strain LFI1238)) protein is Ribosome-recycling factor.